A 92-amino-acid polypeptide reads, in one-letter code: MVRSVWKGPFVEGSLLKKADAARASGRHDVIKIWSRRSTILPQFVGLTFGVYNGQKHVPVAINEEMVGHKFGEFSPTRTFHGHSGDKKSKKG.

Belongs to the universal ribosomal protein uS19 family.

In terms of biological role, protein S19 forms a complex with S13 that binds strongly to the 16S ribosomal RNA. The chain is Small ribosomal subunit protein uS19 from Rhodopseudomonas palustris (strain HaA2).